A 270-amino-acid polypeptide reads, in one-letter code: Probable feruloyl esterase C (270 aa).

The first 22 residues, 1–22 (MAILSRLLTTVTLGSLLTSAVA), serve as a signal peptide directing secretion.

The protein belongs to the faeC family.

The protein resides in the secreted. It carries out the reaction feruloyl-polysaccharide + H2O = ferulate + polysaccharide.. Its function is as follows. Involved in degradation of plant cell walls. Hydrolyzes the feruloyl-arabinose ester bond in arabinoxylans, and the feruloyl-galactose ester bond in pectin. Active against paranitrophenyl-acetate, methyl ferulate and wheat arabinoxylan. In Aspergillus terreus (strain NIH 2624 / FGSC A1156), this protein is Probable feruloyl esterase C (faeC).